The sequence spans 277 residues: Large ribosomal subunit protein uL2 (277 aa).

2 disordered regions span residues 36–58 (PLHK…GGGH) and 219–277 (TVRG…RKNK). Positions 258–277 (KTRKKKNKSDKFIVRRRKNK) are enriched in basic residues.

This sequence belongs to the universal ribosomal protein uL2 family. As to quaternary structure, part of the 50S ribosomal subunit. Forms a bridge to the 30S subunit in the 70S ribosome.

Its function is as follows. One of the primary rRNA binding proteins. Required for association of the 30S and 50S subunits to form the 70S ribosome, for tRNA binding and peptide bond formation. It has been suggested to have peptidyltransferase activity; this is somewhat controversial. Makes several contacts with the 16S rRNA in the 70S ribosome. This is Large ribosomal subunit protein uL2 from Bacillus velezensis (strain DSM 23117 / BGSC 10A6 / LMG 26770 / FZB42) (Bacillus amyloliquefaciens subsp. plantarum).